Here is a 491-residue protein sequence, read N- to C-terminus: CTD small phosphatase-like protein 1 (491 aa).

4 disordered regions span residues 1-53 (MTYA…SLDY), 140-198 (KLTK…TARR), 221-249 (KIQS…TGPP), and 261-282 (TVTG…DGVT). Over residues 17–26 (VPPPRTPVGP) the composition is skewed to pro residues. Over residues 37–49 (SASQPLQPKNGAN) the composition is skewed to polar residues. Residues 141 to 156 (LTKDEKNGGKMNRDGG) show a composition bias toward basic and acidic residues. The segment covering 176–187 (ASTPLNSFSANA) has biased composition (polar residues). Residues 223-237 (QSSQRTNSTNNNHQN) are compositionally biased toward low complexity. Polar residues-rich tracts occupy residues 238–249 (GRPSTPTNTGPP) and 264–276 (GLPT…QQNG). The 159-residue stretch at 307–465 (QDSNKKCLVI…LDILPSLEHL (159 aa)) folds into the FCP1 homology domain. Catalysis depends on Asp317, which acts as the 4-aspartylphosphate intermediate. Positions 317, 319, and 428 each coordinate Mg(2+). Residue Asp319 is the Proton donor of the active site.

In terms of assembly, may interact (via phosphatase domain) with cpna-1. Isoform a and isoform b may interact with lim-9 (via LIM zinc-binding domain). Isoform a and isoform b may interact (via FCP1 homology domain) with unc-89 (via fibronectin type-III domain 1, Ig-like C2-type domain 48/49 and protein kinase domain 1 or Ig-like C2-type domain 50, fibronectin type-III domain 2 and protein kinase domain 2); the interaction may act as a molecular bridge to bring two unc-89 molecules together or to stabilize a loop between the 2 protein kinase domains. The cofactor is Mg(2+). As to expression, expressed in pharyngeal, vulval and body wall muscles.

Its subcellular location is the cytoplasm. It localises to the myofibril. It is found in the sarcomere. The protein resides in the m line. It carries out the reaction O-phospho-L-seryl-[protein] + H2O = L-seryl-[protein] + phosphate. It catalyses the reaction O-phospho-L-threonyl-[protein] + H2O = L-threonyl-[protein] + phosphate. Its activity is regulated as follows. Inhibited by beryllium trifluoride (BeF(3-)) and tetrafluoroaluminate (AlF(4-)) but not by sodium fluoride (NaF) or sodium orthovanadate (Na3VO4). In terms of biological role, phosphatase which may play a role in the egg laying muscles. This Caenorhabditis elegans protein is CTD small phosphatase-like protein 1.